A 690-amino-acid polypeptide reads, in one-letter code: Eukaryotic translation initiation factor 3 subunit B (690 aa).

A compositionally biased stretch (basic and acidic residues) spans 1-11 (MAKKKSEEHSG). Positions 1–36 (MAKKKSEEHSGADANDSDYQEEPNFEDPPGFVDNIS) are disordered. Positions 15–25 (NDSDYQEEPNF) are enriched in acidic residues. Residues 57–141 (SVVVVDNIPK…HTFAVNLFTD (85 aa)) form the RRM domain. WD repeat units follow at residues 207 to 246 (TRER…KIQK), 293 to 331 (DGMS…LLDL), 334 to 369 (IKIP…TLME), 442 to 484 (EIRE…KPSL), and 530 to 575 (PDHF…IKRT). Positions 595–645 (EEKQKEIKKNLKKYYAAFEQKDRLRLTRASKELLEKRSQLRETFMEYRNKR) form a coiled coil.

It belongs to the eIF-3 subunit B family. As to quaternary structure, component of the eukaryotic translation initiation factor 3 (eIF-3) complex. The eIF-3 complex interacts with pix. Interacts with mxt.

The protein resides in the cytoplasm. In terms of biological role, RNA-binding component of the eukaryotic translation initiation factor 3 (eIF-3) complex, which is involved in protein synthesis of a specialized repertoire of mRNAs and, together with other initiation factors, stimulates binding of mRNA and methionyl-tRNAi to the 40S ribosome. The eIF-3 complex specifically targets and initiates translation of a subset of mRNAs involved in cell proliferation. The polypeptide is Eukaryotic translation initiation factor 3 subunit B (Drosophila simulans (Fruit fly)).